Consider the following 1086-residue polypeptide: NAD(P) transhydrogenase, mitochondrial (1086 aa).

Residues 1–43 constitute a mitochondrion transit peptide; the sequence is MANLLKTVVTGCSCPLLSNLGSCKGLRVKKDFLRTFYTHQELW. At 44-474 the chain is on the mitochondrial matrix side; that stretch reads CKAPVKPGIP…TITPFRKTMS (431 aa). Lysine 70 is modified (N6-acetyllysine). An N6-succinyllysine modification is found at lysine 117. Position 182–184 (182–184) interacts with NAD(+); that stretch reads RVT. Residue lysine 224 is modified to N6-succinyllysine. NAD(+) is bound by residues valine 237, 257-259, and glycine 287; that span reads DTR. Position 294 is an N6-succinyllysine (lysine 294). NAD(+)-binding residues include glutamate 300 and leucine 319. An N6-succinyllysine modification is found at lysine 331. Residue lysine 397 is modified to N6-acetyllysine. Transmembrane regions (helical) follow at residues 475–493, 501–521, 527–546, and 558–578; these read TASAYTAGLTGILGLGIAA, MVTTFGLAGIVGYHTVWGVTP, LMSVTNAISGLTAVGGLALM, and GLAALAAFISSVNIAGGFLVT. Residues 579 to 595 lie on the Mitochondrial matrix side of the membrane; the sequence is QRMLDMFKRPTDPPEYN. 5 consecutive transmembrane segments (helical) span residues 596-616, 622-642, 646-666, 672-691, and 702-722; these read YLYLLPAGTFVGGYLAALYSG, IMYLGSGLCCVGALAGLSTQG, LGNALGMIGVAGGLAATLGVL, LLAQMSGAMALGGTIGLTIA, and LVAAFHSLVGLAAVLTCIAEY. Topologically, residues 723–739 are cytoplasmic; that stretch reads IIEYPHFATDAAANLTK. Transmembrane regions (helical) follow at residues 740–760, 778–797, 801–819, 833–853, and 857–879; these read IVAYLGTYIGGVTFSGSLIAY, HLLNAGLLAASVGGIIPFMV, FTTGITCLGSVSALSAVMG, VVITVLNSYSGWALCAEGFLL, and LLTIVGALIGSSGAILSYIMCVA. The Mitochondrial matrix segment spans residues 880 to 1086; that stretch reads MNRSLANVIL…QAKVRESYQK (207 aa). Residues tyrosine 933, 965 to 970, 1007 to 1011, 1026 to 1027, 1042 to 1049, and 1068 to 1069 each bind NADP(+); these read VAGRMP, GANDT, GM, KRSLGVGY, and DA. Lysine 1079 is modified (N6-succinyllysine).

It in the N-terminal section; belongs to the AlaDH/PNT family. In the C-terminal section; belongs to the PNT beta subunit family. As to quaternary structure, homodimer. Widely expressed with expression most readily detectable in adrenal, heart, kidney, thyroid and adipose tissues.

The protein localises to the mitochondrion inner membrane. The catalysed reaction is NAD(+) + NADPH + H(+)(in) = NADH + NADP(+) + H(+)(out). The transhydrogenation between NADH and NADP is coupled to respiration and ATP hydrolysis and functions as a proton pump across the membrane. May play a role in reactive oxygen species (ROS) detoxification in the adrenal gland. The chain is NAD(P) transhydrogenase, mitochondrial (NNT) from Homo sapiens (Human).